The chain runs to 431 residues: Shaggy-related protein kinase beta (431 aa).

Over residues 12 to 24 the composition is skewed to polar residues; sequence SGRNFVSSDNVGE. The segment at 12–65 is disordered; that stretch reads SGRNFVSSDNVGETETPRSKPNQNREETESTETTSYEKDSVSSSENSDHLPKEI. Basic and acidic residues-rich tracts occupy residues 26–39 and 46–65; these read ETPR…REET and SYEK…PKEI. The Protein kinase domain occupies 102 to 386; the sequence is YRAEHVIGTG…ALEACAHPFF (285 aa). ATP contacts are provided by residues 108-116 and Lys131; that span reads IGTGSFGVV. The Proton acceptor role is filled by Asp227. Tyr262 carries the phosphotyrosine modification.

Belongs to the protein kinase superfamily. CMGC Ser/Thr protein kinase family. GSK-3 subfamily. In terms of processing, autophosphorylated mainly on threonine and serine residues.

The enzyme catalyses L-seryl-[protein] + ATP = O-phospho-L-seryl-[protein] + ADP + H(+). It carries out the reaction L-threonyl-[protein] + ATP = O-phospho-L-threonyl-[protein] + ADP + H(+). May mediate extracellular signals to regulate transcription in differentiating cells. In Arabidopsis thaliana (Mouse-ear cress), this protein is Shaggy-related protein kinase beta.